The primary structure comprises 487 residues: Glycogen synthase (487 aa).

Residue Lys-23 coordinates ADP-alpha-D-glucose.

This sequence belongs to the glycosyltransferase 1 family. Bacterial/plant glycogen synthase subfamily.

The catalysed reaction is [(1-&gt;4)-alpha-D-glucosyl](n) + ADP-alpha-D-glucose = [(1-&gt;4)-alpha-D-glucosyl](n+1) + ADP + H(+). Its pathway is glycan biosynthesis; glycogen biosynthesis. Functionally, synthesizes alpha-1,4-glucan chains using ADP-glucose. The sequence is that of Glycogen synthase from Pseudomonas fluorescens (strain Pf0-1).